The chain runs to 154 residues: MSWSLLSNIIKKFTLLHHFQPIGYIYKYIHICTLNHSLGSCVLQANYSIQNNLRSRTLFIQSEITYSHSLESTHFFGILIFFNIKFRVFNRINDPWTVLDNVPEVMFHDRFFINDFTFWVDVLQEAFRMRRWIFRFEQLVVNPSFSNSQWRIIF.

This is an uncharacterized protein from Saccharomyces cerevisiae (strain ATCC 204508 / S288c) (Baker's yeast).